The primary structure comprises 353 residues: Rhodopsin (353 aa).

Residues M1–A36 are Extracellular-facing. 2 N-linked (GlcNAc...) asparagine glycosylation sites follow: N2 and N15. The helical transmembrane segment at Y37–V61 threads the bilayer. The Cytoplasmic segment spans residues T62–N73. The chain crosses the membrane as a helical span at residues Y74–Y96. Residues T97–C110 are Extracellular-facing. C110 and C187 are joined by a disulfide. A helical transmembrane segment spans residues N111 to I133. Positions E134–W136 match the 'Ionic lock' involved in activated form stabilization motif. Residues E134–H152 lie on the Cytoplasmic side of the membrane. Residues A153 to V173 form a helical membrane-spanning segment. Topologically, residues G174–S202 are extracellular. A glycan (N-linked (GlcNAc...) asparagine) is linked at N200. The chain crosses the membrane as a helical span at residues F203–G224. Residues R225 to R252 lie on the Cytoplasmic side of the membrane. Residues M253–W274 traverse the membrane as a helical segment. The Extracellular portion of the chain corresponds to I275–V286. A helical transmembrane segment spans residues F287–C308. N6-(retinylidene)lysine is present on K296. At M309 to A353 the chain is on the cytoplasmic side. S-palmitoyl cysteine attachment occurs at residues C322 and C323. The segment at E330–A353 is disordered. Low complexity predominate over residues A334–A353.

The protein belongs to the G-protein coupled receptor 1 family. Opsin subfamily. Post-translationally, phosphorylated on some or all of the serine and threonine residues present in the C-terminal region. Contains one covalently linked retinal chromophore.

Its subcellular location is the membrane. The protein localises to the cell projection. It localises to the cilium. It is found in the photoreceptor outer segment. Its function is as follows. Photoreceptor required for image-forming vision at low light intensity. While most salt water fish species use retinal as chromophore, most freshwater fish use 3-dehydroretinal, or a mixture of retinal and 3-dehydroretinal. Light-induced isomerization of 11-cis to all-trans retinal triggers a conformational change that activates signaling via G-proteins. Subsequent receptor phosphorylation mediates displacement of the bound G-protein alpha subunit by arrestin and terminates signaling. In Tetraodon nigroviridis (Spotted green pufferfish), this protein is Rhodopsin (rho).